Consider the following 447-residue polypeptide: Signal recognition particle protein (447 aa).

GTP contacts are provided by residues 108–115, 190–194, and 248–251; these read GLQGSGKT, DTAGR, and TKLD.

Belongs to the GTP-binding SRP family. SRP54 subfamily. As to quaternary structure, part of the signal recognition particle protein translocation system, which is composed of SRP and FtsY. Interacts with RNA.

Its subcellular location is the cytoplasm. The enzyme catalyses GTP + H2O = GDP + phosphate + H(+). Functionally, involved in targeting and insertion of nascent membrane proteins into the cytoplasmic membrane. Binds to the hydrophobic signal sequence of the ribosome-nascent chain (RNC) as it emerges from the ribosomes. The SRP-RNC complex is then targeted to the cytoplasmic membrane where it interacts with the SRP receptor FtsY. This Mycoplasma mycoides protein is Signal recognition particle protein.